Reading from the N-terminus, the 565-residue chain is NAD-dependent malic enzyme (565 aa).

The active-site Proton donor is Y104. R157 is an NAD(+) binding site. The active-site Proton acceptor is the K175. E246, D247, and D270 together coordinate a divalent metal cation. Positions 270 and 418 each coordinate NAD(+).

Belongs to the malic enzymes family. As to quaternary structure, homotetramer. The cofactor is Mg(2+). It depends on Mn(2+) as a cofactor.

The catalysed reaction is (S)-malate + NAD(+) = pyruvate + CO2 + NADH. It catalyses the reaction oxaloacetate + H(+) = pyruvate + CO2. This chain is NAD-dependent malic enzyme, found in Shigella flexneri serotype 5b (strain 8401).